Consider the following 591-residue polypeptide: PDZ and LIM domain protein 5 (591 aa).

Position 2 is an N-acetylserine (S2). Residue S2 is modified to Phosphoserine. The PDZ domain occupies 2–85; the sequence is SNYSVSLVGP…SLNMTLQRAS (84 aa). K89 is subject to N6-acetyllysine; alternate. The residue at position 89 (K89) is an N6-succinyllysine; alternate. Residue K89 forms a Glycyl lysine isopeptide (Lys-Gly) (interchain with G-Cter in SUMO2); alternate linkage. E102, K105, S111, S134, and S137 each carry phosphoserine. 2 disordered regions span residues 121–166 and 186–398; these read TNMA…PTPV and SADQ…DQDT. Over residues 134 to 143 the composition is skewed to polar residues; it reads SVSSPKVTSI. Low complexity predominate over residues 144–166; that stretch reads PSPSSAFTPAHAATSSHASPTPV. Polar residues-rich tracts occupy residues 186 to 195 and 205 to 217; these read SADQCSSPPN and RQPT…SESA. Phosphoserine is present on residues Q218, S228, and S260. 2 stretches are compositionally biased toward basic and acidic residues: residues 258-273 and 294-304; these read DASK…DWRP and HLTESENDNTK. The span at 310–339 shows a compositional bias: low complexity; the sequence is QEPSQQPASSGASPLSASEGPESPGSSRPS. S313, P316, and S322 each carry phosphoserine. K350 bears the N6-acetyllysine mark. A compositionally biased stretch (polar residues) spans 353 to 385; sequence GSTSVKSPSWQRPNQAAPSTGRISNNARSSGTG. Phosphoserine occurs at positions 359 and 361. 3 LIM zinc-binding domains span residues 413 to 472, 472 to 531, and 531 to 591; these read PMCA…FFAP, PECG…LFGT, and TICR…SVNF.

Interacts with various PKC isoforms through the LIM domains. Interacts with actin and alpha-actinin through the PDZ domain. Interacts (via LIM domains) with SIPA1L1/SPAR; this interaction may occur preferentially with isoform 1.

It is found in the postsynaptic density. The protein localises to the presynapse. The protein resides in the postsynapse. It localises to the cytoplasm. Its subcellular location is the cytosol. In terms of biological role, may play an important role in the heart development by scaffolding PKC to the Z-disk region. May play a role in the regulation of cardiomyocyte expansion. Isoforms lacking the LIM domains may negatively modulate the scaffolding activity of isoform 1. Overexpression promotes the development of heart hypertrophy. Contributes to the regulation of dendritic spine morphogenesis in neurons. May be required to restrain postsynaptic growth of excitatory synapses. Isoform 1, but not isoform 2, expression favors spine thinning and elongation. This chain is PDZ and LIM domain protein 5, found in Mus musculus (Mouse).